A 270-amino-acid chain; its full sequence is Putative carboxymethylenebutenolidase (270 aa).

Catalysis depends on residues cysteine 147, aspartate 204, and histidine 236.

Belongs to the dienelactone hydrolase family.

It carries out the reaction 2-(5-oxo-2,5-dihydrofuran-2-ylidene)acetate + H2O = 4-oxohex-2-enedioate + H(+). The chain is Putative carboxymethylenebutenolidase (ysgA) from Salmonella typhi.